Reading from the N-terminus, the 58-residue chain is Large ribosomal subunit protein bL32c (58 aa).

Residues 1-19 show a composition bias toward basic residues; sequence MAVPKKRKSKMKTRLRKAQ. Residues 1–25 form a disordered region; the sequence is MAVPKKRKSKMKTRLRKAQWKSEAS.

It belongs to the bacterial ribosomal protein bL32 family.

Its subcellular location is the plastid. The protein localises to the chloroplast. This is Large ribosomal subunit protein bL32c (rpl32) from Chlorella vulgaris (Green alga).